The chain runs to 217 residues: NADH-quinone oxidoreductase subunit I (217 aa).

A disordered region spans residues 22–41 (TTEQYPEEKKETAPRFHGRH). 4Fe-4S ferredoxin-type domains lie at 43–73 (LNRHPDGLEKCVGCELCAWACPADAIYVEGA) and 89–118 (RVYQINYLRCILCGLCIEACPTRALTMSND). The [4Fe-4S] cluster site is built by Cys-53, Cys-56, Cys-59, Cys-63, Cys-98, Cys-101, Cys-104, and Cys-108. Residues 193–217 (ARRTAGEHSRADEVPAHGAGSERPR) are disordered.

This sequence belongs to the complex I 23 kDa subunit family. As to quaternary structure, NDH-1 is composed of 14 different subunits. Subunits NuoA, H, J, K, L, M, N constitute the membrane sector of the complex. It depends on [4Fe-4S] cluster as a cofactor.

Its subcellular location is the cell membrane. The enzyme catalyses a quinone + NADH + 5 H(+)(in) = a quinol + NAD(+) + 4 H(+)(out). Its function is as follows. NDH-1 shuttles electrons from NADH, via FMN and iron-sulfur (Fe-S) centers, to quinones in the respiratory chain. The immediate electron acceptor for the enzyme in this species is believed to be ubiquinone. Couples the redox reaction to proton translocation (for every two electrons transferred, four hydrogen ions are translocated across the cytoplasmic membrane), and thus conserves the redox energy in a proton gradient. This chain is NADH-quinone oxidoreductase subunit I, found in Frankia casuarinae (strain DSM 45818 / CECT 9043 / HFP020203 / CcI3).